A 396-amino-acid polypeptide reads, in one-letter code: Elongation factor Tu (396 aa).

The region spanning 10 to 205 (KPHVNIGTIG…AVDESIPDPV (196 aa)) is the tr-type G domain. Residues 19 to 26 (GHVDHGKT) form a G1 region. 19–26 (GHVDHGKT) is a GTP binding site. T26 is a binding site for Mg(2+). The tract at residues 62–66 (GITIN) is G2. The G3 stretch occupies residues 83–86 (DAPG). GTP is bound by residues 83 to 87 (DAPGH) and 138 to 141 (NKAD). The segment at 138-141 (NKAD) is G4. Residues 175-177 (SAL) are G5.

This sequence belongs to the TRAFAC class translation factor GTPase superfamily. Classic translation factor GTPase family. EF-Tu/EF-1A subfamily. As to quaternary structure, monomer.

The protein localises to the cytoplasm. It catalyses the reaction GTP + H2O = GDP + phosphate + H(+). In terms of biological role, GTP hydrolase that promotes the GTP-dependent binding of aminoacyl-tRNA to the A-site of ribosomes during protein biosynthesis. The chain is Elongation factor Tu from Mycobacterium avium (strain 104).